The following is an 874-amino-acid chain: Alanine--tRNA ligase (874 aa).

Zn(2+) is bound by residues H563, H567, C665, and H669.

The protein belongs to the class-II aminoacyl-tRNA synthetase family. The cofactor is Zn(2+).

Its subcellular location is the cytoplasm. It catalyses the reaction tRNA(Ala) + L-alanine + ATP = L-alanyl-tRNA(Ala) + AMP + diphosphate. In terms of biological role, catalyzes the attachment of alanine to tRNA(Ala) in a two-step reaction: alanine is first activated by ATP to form Ala-AMP and then transferred to the acceptor end of tRNA(Ala). Also edits incorrectly charged Ser-tRNA(Ala) and Gly-tRNA(Ala) via its editing domain. In Haemophilus ducreyi (strain 35000HP / ATCC 700724), this protein is Alanine--tRNA ligase.